The sequence spans 142 residues: MKTFVAKPAEVKRDWFVVDAEGKTLGRLATEIALRLRGKHKAEYTPHVDTGDYIIVINAEKITVTGNKAKGKIYYHHTGFIGGIKAISFEDLIKRAPERVIEKAVKGMLPRGPLGRAMYRKLKVYAGTEHQHSAQQPQVLDI.

Belongs to the universal ribosomal protein uL13 family. Part of the 50S ribosomal subunit.

Functionally, this protein is one of the early assembly proteins of the 50S ribosomal subunit, although it is not seen to bind rRNA by itself. It is important during the early stages of 50S assembly. The polypeptide is Large ribosomal subunit protein uL13 (Psychromonas ingrahamii (strain DSM 17664 / CCUG 51855 / 37)).